Here is a 93-residue protein sequence, read N- to C-terminus: Small ribosomal subunit protein uS17 (93 aa).

The protein belongs to the universal ribosomal protein uS17 family. Part of the 30S ribosomal subunit.

In terms of biological role, one of the primary rRNA binding proteins, it binds specifically to the 5'-end of 16S ribosomal RNA. This is Small ribosomal subunit protein uS17 from Corynebacterium kroppenstedtii (strain DSM 44385 / JCM 11950 / CIP 105744 / CCUG 35717).